Reading from the N-terminus, the 476-residue chain is Proline--tRNA ligase 2 (476 aa).

The protein belongs to the class-II aminoacyl-tRNA synthetase family. ProS type 3 subfamily. In terms of assembly, homodimer.

The protein resides in the cytoplasm. It catalyses the reaction tRNA(Pro) + L-proline + ATP = L-prolyl-tRNA(Pro) + AMP + diphosphate. In terms of biological role, catalyzes the attachment of proline to tRNA(Pro) in a two-step reaction: proline is first activated by ATP to form Pro-AMP and then transferred to the acceptor end of tRNA(Pro). The protein is Proline--tRNA ligase 2 of Bacillus cereus (strain ATCC 14579 / DSM 31 / CCUG 7414 / JCM 2152 / NBRC 15305 / NCIMB 9373 / NCTC 2599 / NRRL B-3711).